Reading from the N-terminus, the 203-residue chain is EDQQNLSQRYIELVVVADHRVFMKYNSDLNIIRKRVHELVNTINGFYRSLNIDVSLTDLEIWSDQDFITVDSSAKNTLNSFGEWREADLLRRKSHDHAQLLTAINFEGKIIGRAYTSSMCNPRKSVGIXKDHSPINLLVGVTMAHELGHNLGMNHDGEKCLRGASLCIMRPGLTPGRSYEFSDDSMGYYQSFLKQYNPQIXNK.

A Pyrrolidone carboxylic acid (Glu) modification is found at Glu1. N-linked (GlcNAc...) asparagine glycosylation is present at Asn5. A Peptidase M12B domain is found at 9–203 (RYIELVVVAD…KQYNPQIXNK (195 aa)). Positions 12 and 96 each coordinate Ca(2+). His145 provides a ligand contact to Zn(2+). The active site involves Glu146. His149 and His155 together coordinate Zn(2+). Cys160 and Cys167 are oxidised to a cystine. Asn202 contacts Ca(2+).

It belongs to the venom metalloproteinase (M12B) family. P-I subfamily. In terms of assembly, monomer. The cofactor is Zn(2+). The N-terminus is blocked. Expressed by the venom gland.

It localises to the secreted. It carries out the reaction Cleavage of 5-His-|-Leu-6, 9-Ser-|-His-10, 10-His-|-Leu-11, 14-Ala-|-Leu-15 and 16-Tyr-|-Leu-17 in insulin B chain.. Its activity is regulated as follows. Inhibited by EDTA and alpha2-macroglobulin. Its function is as follows. Snake venom zinc metalloprotease that has Aalpha, Bbeta fibrin(ogen)olytic activities. It cleaves the Aalpha chain of fibrinogen first followed by the Bbeta chain and shows no effect on the gamma chain. Does not induce or inhibit platelet aggregation, and is unable to activate plasminogen. Exhibits low lethality when tested on mice. Intravenous administration results in thrombolysis within one hour followed by recanalization. Fibrinogenolytic activity results in a 60% decrease in the rat's plasma fibrinogen level. Histological examination of kidney, liver, heart and lung tissue shows no necrosis nor hemorrhage. The chain is Snake venom metalloproteinase atroxase from Crotalus atrox (Western diamondback rattlesnake).